The primary structure comprises 293 residues: Protease HtpX (293 aa).

The next 2 helical transmembrane spans lie at 4–24 (IALF…VLSL) and 34–54 (GLMI…LLMS). Residue His-139 participates in Zn(2+) binding. The active site involves Glu-140. A Zn(2+)-binding site is contributed by His-143. The next 2 membrane-spanning stretches (helical) occupy residues 158–178 (VVNT…AGFL) and 193–213 (MVYF…ASII). Residue Glu-222 participates in Zn(2+) binding.

Belongs to the peptidase M48B family. Zn(2+) is required as a cofactor.

It is found in the cell inner membrane. This Yersinia pseudotuberculosis serotype O:1b (strain IP 31758) protein is Protease HtpX.